The sequence spans 466 residues: Phytase A (466 aa).

Residues 1–19 form the signal peptide; the sequence is MGVFVVLLSIATLFGSTSG. Residue Asn27 is glycosylated (N-linked (GlcNAc...) asparagine). A disulfide bridge links Cys31 with Cys40. Residues Tyr51, Arg81, His82, Arg85, and Thr88 each contribute to the 1D-myo-inositol hexakisphosphate site. Disulfide bonds link Cys71–Cys414, Cys215–Cys465, Cys264–Cys282, and Cys436–Cys444. Residue His82 is the Nucleophile of the active site. Asn105 and Asn120 each carry an N-linked (GlcNAc...) asparagine glycan. Arg165 contributes to the 1D-myo-inositol hexakisphosphate binding site. Asn207 and Asn230 each carry an N-linked (GlcNAc...) asparagine glycan. Lys301 provides a ligand contact to 1D-myo-inositol hexakisphosphate. N-linked (GlcNAc...) asparagine glycosylation is found at Asn339 and Asn352. 2 residues coordinate 1D-myo-inositol hexakisphosphate: His361 and Asp362. The N-linked (GlcNAc...) asparagine glycan is linked to Asn376.

It belongs to the histidine acid phosphatase family. As to quaternary structure, monomer.

It localises to the secreted. It catalyses the reaction 1D-myo-inositol hexakisphosphate + H2O = 1D-myo-inositol 1,2,4,5,6-pentakisphosphate + phosphate. It carries out the reaction 1D-myo-inositol 1,2,4,5,6-pentakisphosphate + H2O = 1D-myo-inositol 1,2,5,6-tetrakisphosphate + phosphate. The catalysed reaction is 1D-myo-inositol 1,2,5,6-tetrakisphosphate + H2O = 1D-myo-inositol 1,2,6-trisphosphate + phosphate. The enzyme catalyses 1D-myo-inositol 1,2,6-trisphosphate + H2O = 1D-myo-inositol 1,2-bisphosphate + phosphate. It catalyses the reaction 1D-myo-inositol 1,2-bisphosphate + H2O = 1D-myo-inositol 2-phosphate + phosphate. Functionally, catalyzes the phosphate monoester hydrolysis of phytic acid (myo-inositol hexakisphosphate), which results in the stepwise formation of myo-inositol pentakis-, tetrakis-, tris-, bis-, and monophosphates, as well as the liberation of inorganic phosphate. Myo-inositol 2-monophosphate is the end product. Has a broad substrate specificity and is also able to dephosphorylate other classic acid phosphatase substrates such as p-nitrophenyl phosphate, phenyl phosphate, fructose 1,6-bisphosphate, glucose 6-phosphate, 3-phosphoglycerate, as well as ADP and ATP. This Aspergillus terreus protein is Phytase A.